The chain runs to 337 residues: 2-ketoarginine methyltransferase (337 aa).

Belongs to the 2-ketoarginine methyltransferase family.

It catalyses the reaction 5-guanidino-2-oxopentanoate + S-adenosyl-L-methionine = (3R)-5-guanidino-3-methyl-2-oxopentanoate + S-adenosyl-L-homocysteine + H(+). It participates in antibiotic biosynthesis. Functionally, S-adenosyl-L-methionine-dependent methyltransferase involved in the formation of the rare amino acid 3-methylarginine (MeArg), which is incorporated into the peptidyl nucleoside antibiotic arginomycin. Transfers the methyl group from S-adenosyl-L-methionine into 5-guanidino-2-oxopentanoate acid to yield 5-guanidino-3-methyl-2-oxopentanoate, a precursor of MeArg. This Streptomyces arginensis protein is 2-ketoarginine methyltransferase.